We begin with the raw amino-acid sequence, 381 residues long: Acetylornithine deacetylase (381 aa).

A Zn(2+)-binding site is contributed by His-79. Asp-81 is an active-site residue. Residue Asp-111 participates in Zn(2+) binding. Glu-143 is a catalytic residue. Zn(2+) is bound by residues Glu-144, Glu-168, and His-354.

It belongs to the peptidase M20A family. ArgE subfamily. As to quaternary structure, homodimer. Zn(2+) serves as cofactor. Co(2+) is required as a cofactor. The cofactor is glutathione.

The protein localises to the cytoplasm. The catalysed reaction is N(2)-acetyl-L-ornithine + H2O = L-ornithine + acetate. The protein operates within amino-acid biosynthesis; L-arginine biosynthesis; L-ornithine from N(2)-acetyl-L-ornithine (linear): step 1/1. Functionally, catalyzes the hydrolysis of the amide bond of N(2)-acetylated L-amino acids. Cleaves the acetyl group from N-acetyl-L-ornithine to form L-ornithine, an intermediate in L-arginine biosynthesis pathway, and a branchpoint in the synthesis of polyamines. This chain is Acetylornithine deacetylase, found in Buchnera aphidicola subsp. Schizaphis graminum (strain Sg).